Reading from the N-terminus, the 162-residue chain is MKLNFLVTTVALLVAFPPPYECRAIDSSSNQPATDPDGERQSAPVLARLGEEYFIRLGNRYQNSLRSSPDTYPETSQYPKRALQLQLTQRLLEGKVGNVGRWDGNYALRALDSEERERRSEEPPISLDLTFHLLREVLEMARAEQLAQQAHSNRKMMEIFGK.

A signal peptide spans 1–24 (MKLNFLVTTVALLVAFPPPYECRA). A propeptide spanning residues 25–119 (IDSSSNQPAT…ALDSEERERR (95 aa)) is cleaved from the precursor. Residue F160 is modified to Phenylalanine amide.

This sequence belongs to the sauvagine/corticotropin-releasing factor/urotensin I family.

It is found in the secreted. This hormone from hypothalamus regulates the release of corticotropin from pituitary gland. The sequence is that of Corticoliberin-1 (crf1) from Catostomus commersonii (White sucker).